We begin with the raw amino-acid sequence, 241 residues long: Triosephosphate isomerase (241 aa).

9–11 (NWK) serves as a coordination point for substrate. Catalysis depends on H96, which acts as the Electrophile. Catalysis depends on E165, which acts as the Proton acceptor. Substrate is bound by residues G171, S204, and 225 to 226 (GG).

It belongs to the triosephosphate isomerase family. As to quaternary structure, homodimer.

It localises to the cytoplasm. It carries out the reaction D-glyceraldehyde 3-phosphate = dihydroxyacetone phosphate. It functions in the pathway carbohydrate biosynthesis; gluconeogenesis. The protein operates within carbohydrate degradation; glycolysis; D-glyceraldehyde 3-phosphate from glycerone phosphate: step 1/1. Involved in the gluconeogenesis. Catalyzes stereospecifically the conversion of dihydroxyacetone phosphate (DHAP) to D-glyceraldehyde-3-phosphate (G3P). The sequence is that of Triosephosphate isomerase from Prochlorococcus marinus (strain MIT 9312).